A 93-amino-acid chain; its full sequence is UPF0728 protein C10orf53 homolog (93 aa).

Belongs to the UPF0728 family.

This chain is UPF0728 protein C10orf53 homolog, found in Mus musculus (Mouse).